We begin with the raw amino-acid sequence, 556 residues long: ATP synthase subunit beta-2, mitochondrial (556 aa).

The span at 1-20 shows a compositional bias: low complexity; sequence MASRRVLSSLLRSSSGRSAA. The tract at residues 1 to 37 is disordered; the sequence is MASRRVLSSLLRSSSGRSAAKLVNRNPRLPSPSPARH. The N-terminal 51 residues, 1 to 51, are a transit peptide targeting the mitochondrion; that stretch reads MASRRVLSSLLRSSSGRSAAKLVNRNPRLPSPSPARHAAPCSYLLGRVAEY. Ser59 is modified (phosphoserine). 231-238 lines the ATP pocket; the sequence is GGAGVGKT.

It belongs to the ATPase alpha/beta chains family. In terms of assembly, F-type ATPases have 2 components, CF(1) - the catalytic core - and CF(0) - the membrane proton channel. CF(1) has five subunits: alpha(3), beta(3), gamma(1), delta(1), epsilon(1). CF(0) has three main subunits: a, b and c.

Its subcellular location is the mitochondrion. The protein localises to the mitochondrion inner membrane. The catalysed reaction is ATP + H2O + 4 H(+)(in) = ADP + phosphate + 5 H(+)(out). In terms of biological role, mitochondrial membrane ATP synthase (F(1)F(0) ATP synthase or Complex V) produces ATP from ADP in the presence of a proton gradient across the membrane which is generated by electron transport complexes of the respiratory chain. F-type ATPases consist of two structural domains, F(1) - containing the extramembraneous catalytic core, and F(0) - containing the membrane proton channel, linked together by a central stalk and a peripheral stalk. During catalysis, ATP synthesis in the catalytic domain of F(1) is coupled via a rotary mechanism of the central stalk subunits to proton translocation. Subunits alpha and beta form the catalytic core in F(1). Rotation of the central stalk against the surrounding alpha(3)beta(3) subunits leads to hydrolysis of ATP in three separate catalytic sites on the beta subunits. This is ATP synthase subunit beta-2, mitochondrial from Arabidopsis thaliana (Mouse-ear cress).